Here is a 151-residue protein sequence, read N- to C-terminus: Small ribosomal subunit protein uS11 (151 aa).

This sequence belongs to the universal ribosomal protein uS11 family.

In Podocoryna carnea (Hydrozoan), this protein is Small ribosomal subunit protein uS11 (RPS14).